A 395-amino-acid polypeptide reads, in one-letter code: S-adenosylmethionine synthase (395 aa).

Position 16 (His-16) interacts with ATP. Asp-18 serves as a coordination point for Mg(2+). Glu-44 serves as a coordination point for K(+). 2 residues coordinate L-methionine: Glu-57 and Gln-100. The segment at 100 to 110 is flexible loop; it reads QSPDIAQGVDR. ATP-binding positions include 167–169, 233–234, Asp-242, 248–249, Ala-265, and Lys-269; these read DAK, RF, and RK. Position 242 (Asp-242) interacts with L-methionine. Lys-273 serves as a coordination point for L-methionine.

Belongs to the AdoMet synthase family. In terms of assembly, homotetramer; dimer of dimers. It depends on Mg(2+) as a cofactor. The cofactor is K(+).

The protein localises to the cytoplasm. It catalyses the reaction L-methionine + ATP + H2O = S-adenosyl-L-methionine + phosphate + diphosphate. It functions in the pathway amino-acid biosynthesis; S-adenosyl-L-methionine biosynthesis; S-adenosyl-L-methionine from L-methionine: step 1/1. In terms of biological role, catalyzes the formation of S-adenosylmethionine (AdoMet) from methionine and ATP. The overall synthetic reaction is composed of two sequential steps, AdoMet formation and the subsequent tripolyphosphate hydrolysis which occurs prior to release of AdoMet from the enzyme. The polypeptide is S-adenosylmethionine synthase (Burkholderia thailandensis (strain ATCC 700388 / DSM 13276 / CCUG 48851 / CIP 106301 / E264)).